Reading from the N-terminus, the 384-residue chain is tRNA(Met) cytidine acetate ligase (384 aa).

ATP contacts are provided by residues 7–20 (VAEYNPFHSGHEFL), G101, N153, and R178.

The protein belongs to the TmcAL family.

The protein resides in the cytoplasm. It catalyses the reaction cytidine(34) in elongator tRNA(Met) + acetate + ATP = N(4)-acetylcytidine(34) in elongator tRNA(Met) + AMP + diphosphate. Functionally, catalyzes the formation of N(4)-acetylcytidine (ac(4)C) at the wobble position of elongator tRNA(Met), using acetate and ATP as substrates. First activates an acetate ion to form acetyladenylate (Ac-AMP) and then transfers the acetyl group to tRNA to form ac(4)C34. In Lactobacillus delbrueckii subsp. bulgaricus (strain ATCC BAA-365 / Lb-18), this protein is tRNA(Met) cytidine acetate ligase.